A 499-amino-acid chain; its full sequence is Guanosine-5'-triphosphate,3'-diphosphate pyrophosphatase (499 aa).

Belongs to the GppA/Ppx family. GppA subfamily.

It catalyses the reaction guanosine 3'-diphosphate 5'-triphosphate + H2O = guanosine 3',5'-bis(diphosphate) + phosphate + H(+). The protein operates within purine metabolism; ppGpp biosynthesis; ppGpp from GTP: step 2/2. Functionally, catalyzes the conversion of pppGpp to ppGpp. Guanosine pentaphosphate (pppGpp) is a cytoplasmic signaling molecule which together with ppGpp controls the 'stringent response', an adaptive process that allows bacteria to respond to amino acid starvation, resulting in the coordinated regulation of numerous cellular activities. This is Guanosine-5'-triphosphate,3'-diphosphate pyrophosphatase from Klebsiella pneumoniae subsp. pneumoniae (strain ATCC 700721 / MGH 78578).